A 355-amino-acid chain; its full sequence is Phenylalanine--tRNA ligase alpha subunit (355 aa).

Glu-273 lines the Mg(2+) pocket.

This sequence belongs to the class-II aminoacyl-tRNA synthetase family. Phe-tRNA synthetase alpha subunit type 1 subfamily. As to quaternary structure, tetramer of two alpha and two beta subunits. Mg(2+) is required as a cofactor.

The protein resides in the cytoplasm. It carries out the reaction tRNA(Phe) + L-phenylalanine + ATP = L-phenylalanyl-tRNA(Phe) + AMP + diphosphate + H(+). The polypeptide is Phenylalanine--tRNA ligase alpha subunit (Bifidobacterium adolescentis (strain ATCC 15703 / DSM 20083 / NCTC 11814 / E194a)).